We begin with the raw amino-acid sequence, 68 residues long: Antimicrobial peptide Eval418 (68 aa).

A signal peptide spans 1–23 (MRTQLAVLLVALVLLQMIAQSEA). Position 36 is an isoleucine amide (Ile36). The propeptide occupies 37–68 (GKRGLRNLDDLDDVFDDDLSAADLEFLKQLMR).

It belongs to the non-disulfide-bridged peptide (NDBP) superfamily. Short antimicrobial peptide (group 4) family. In terms of tissue distribution, expressed by the venom gland.

It is found in the secreted. Probable antimicrobial peptide. Shows dose-dependent and time-dependent inactivation of herpes simplex virus type 1 (HSV-1) and dose-dependent inhibition of HSV-1 viral attachment to host cells. Scarcely suppress an established HSV-1 infection due to poor cellular uptake. This is Antimicrobial peptide Eval418 from Euscorpiops validus (Scorpion).